A 339-amino-acid polypeptide reads, in one-letter code: uncharacterized protein (339 aa).

Polar residues predominate over residues 1-12; that stretch reads MDIDLNNQTDNN. A disordered region spans residues 1–30; sequence MDIDLNNQTDNNELIVEDTENPKNPNSTNI.

This is an uncharacterized protein from Acanthamoeba polyphaga (Amoeba).